A 177-amino-acid chain; its full sequence is Meiotic chromosome segregation protein C17A2.07c (177 aa).

Residues 71 to 90 (EDDSINKPTEEADEAPRTQL) are disordered. Residues 74–86 (SINKPTEEADEAP) show a composition bias toward basic and acidic residues.

The protein resides in the nucleus. Functionally, involved in meiotic chromosome segregation. This Schizosaccharomyces pombe (strain 972 / ATCC 24843) (Fission yeast) protein is Meiotic chromosome segregation protein C17A2.07c.